A 391-amino-acid chain; its full sequence is Putative 12-oxophytodienoate reductase 6 (391 aa).

Residues 42-44 (PMT), Ala75, and Gln117 contribute to the FMN site. 189–192 (HGAN) contributes to the substrate binding site. Tyr194 functions as the Proton donor in the catalytic mechanism. FMN is bound at residue Arg241. Arg282 contributes to the substrate binding site. FMN is bound by residues Gly312 and 333–334 (GR). The interval 372 to 391 (YPFLDEHHHDDDDDSNAPSA) is disordered. A compositionally biased stretch (acidic residues) spans 382–391 (DDDDSNAPSA).

It belongs to the NADH:flavin oxidoreductase/NADH oxidase family. The cofactor is FMN.

Functionally, putative oxophytodienoate reductase that may be involved in the biosynthesis or metabolism of oxylipin signaling molecules. The chain is Putative 12-oxophytodienoate reductase 6 (OPR6) from Oryza sativa subsp. japonica (Rice).